Consider the following 336-residue polypeptide: MPQPSRPRKGSMGFSPRSRAASEVPRFNSWPDDEGQPGLQGFAGYKAGMSHVVAINDEPNSPREGQEETVPVTVVETPPMRAVAVRAYEDTPYGKRPLTEVWTDEVHEDLERSLSVPEEQSGDIEGDIRTALDEGALADVRVITHTVPGALSSVPKKEPDVMETRVGGGSLSDRVDFALDLVDDGGEHTVTDVFRAGEYTDVAGITKGKGTQGPVKRWGVQKRKGKHARQGWRRRIGNLGPWNPSRVRSTVPQQGQTGYHQRTELNKRLIDLGDDDVSPDGGFVNYGEVDGPYALVKGSVPGPDKRLVRFRPAVRPGDQPRLDPEVRYVSTASNQG.

3 disordered regions span residues 1–43 (MPQP…QGFA), 205–230 (ITKG…HARQ), and 311–336 (RPAV…SNQG). The segment covering 219 to 230 (GVQKRKGKHARQ) has biased composition (basic residues).

It belongs to the universal ribosomal protein uL3 family. As to quaternary structure, part of the 50S ribosomal subunit. Forms a cluster with proteins L14 and L24e.

In terms of biological role, one of the primary rRNA binding proteins, it binds directly near the 3'-end of the 23S rRNA, where it nucleates assembly of the 50S subunit. This Natronomonas pharaonis (strain ATCC 35678 / DSM 2160 / CIP 103997 / JCM 8858 / NBRC 14720 / NCIMB 2260 / Gabara) (Halobacterium pharaonis) protein is Large ribosomal subunit protein uL3.